A 98-amino-acid chain; its full sequence is uncharacterized protein (98 aa).

This sequence belongs to the CFAP97 family. In terms of tissue distribution, expressed in a number of tissues including brain, thymus, lung, heart, liver, spleen, kidney and testis.

This is an uncharacterized protein from Mus musculus (Mouse).